The following is a 327-amino-acid chain: Pyruvate dehydrogenase E1 component subunit beta (327 aa).

Glu-60 contributes to the thiamine diphosphate binding site. Residues Val-113, Ala-161, Ile-162, and Glu-164 each coordinate K(+).

In terms of assembly, heterodimer of an alpha and a beta chain. Thiamine diphosphate serves as cofactor.

Its subcellular location is the plastid. The protein localises to the chloroplast. The catalysed reaction is N(6)-[(R)-lipoyl]-L-lysyl-[protein] + pyruvate + H(+) = N(6)-[(R)-S(8)-acetyldihydrolipoyl]-L-lysyl-[protein] + CO2. In terms of biological role, the pyruvate dehydrogenase complex catalyzes the overall conversion of pyruvate to acetyl-CoA and CO(2). It contains multiple copies of three enzymatic components: pyruvate dehydrogenase (E1), dihydrolipoamide acetyltransferase (E2) and lipoamide dehydrogenase (E3). This Cyanidium caldarium (Red alga) protein is Pyruvate dehydrogenase E1 component subunit beta (pdhB).